A 507-amino-acid polypeptide reads, in one-letter code: ATP synthase subunit alpha, chloroplastic (507 aa).

170 to 177 (GDRQTGKT) lines the ATP pocket.

Belongs to the ATPase alpha/beta chains family. F-type ATPases have 2 components, CF(1) - the catalytic core - and CF(0) - the membrane proton channel. CF(1) has five subunits: alpha(3), beta(3), gamma(1), delta(1), epsilon(1). CF(0) has four main subunits: a, b, b' and c.

It localises to the plastid. It is found in the chloroplast thylakoid membrane. The catalysed reaction is ATP + H2O + 4 H(+)(in) = ADP + phosphate + 5 H(+)(out). Functionally, produces ATP from ADP in the presence of a proton gradient across the membrane. The alpha chain is a regulatory subunit. The protein is ATP synthase subunit alpha, chloroplastic of Gossypium hirsutum (Upland cotton).